A 635-amino-acid polypeptide reads, in one-letter code: Leucine aminopeptidase 2-2 (635 aa).

Substrate-binding positions include 141-143 (QCQ) and 265-270 (PYGGME). Zn(2+) is bound at residue His-294. Glu-295 serves as the catalytic Proton acceptor. Positions 298 and 317 each coordinate Zn(2+). Tyr-399 serves as the catalytic Proton donor.

This sequence belongs to the peptidase M1 family. Zn(2+) is required as a cofactor.

It localises to the cytoplasm. The protein localises to the nucleus. The catalysed reaction is an epoxide + H2O = an ethanediol. Its function is as follows. Aminopeptidase that preferentially cleaves di- and tripeptides. Also has low epoxide hydrolase activity (in vitro). Can hydrolyze the epoxide leukotriene LTA(4) but it forms preferentially 5,6-dihydroxy-7,9,11,14-eicosatetraenoic acid rather than the cytokine leukotriene B(4) as the product compared to the homologous mammalian enzyme (in vitro). This is Leucine aminopeptidase 2-2 (LTA4) from Scheffersomyces stipitis (strain ATCC 58785 / CBS 6054 / NBRC 10063 / NRRL Y-11545) (Yeast).